A 184-amino-acid polypeptide reads, in one-letter code: Photosystem I assembly protein Ycf4 (184 aa).

2 helical membrane-spanning segments follow: residues Phe-22–Ser-42 and Ile-57–Ser-77.

Belongs to the Ycf4 family.

The protein resides in the plastid. It is found in the chloroplast thylakoid membrane. Functionally, seems to be required for the assembly of the photosystem I complex. This is Photosystem I assembly protein Ycf4 from Phalaenopsis aphrodite subsp. formosana (Moth orchid).